Consider the following 375-residue polypeptide: Alcohol dehydrogenase E chain (375 aa).

N-acetylserine is present on Ser2. Zn(2+)-binding residues include Cys47, Ser49, His68, Cys98, Cys101, Cys104, Cys112, and Cys175. Residues Ser49 and His68 each contribute to the an alcohol site. Ser49 provides a ligand contact to NAD(+). NAD(+) is bound by residues 200–205, Asp224, Lys229, Val293, 293–295, Phe320, and Arg370; these read GLGGVG and VGV.

Belongs to the zinc-containing alcohol dehydrogenase family. Class-I subfamily. Dimer of identical or non-identical chains of two types (E and S) coded by 2 separate genes at different loci. The cofactor is Zn(2+).

Its subcellular location is the cytoplasm. It catalyses the reaction a primary alcohol + NAD(+) = an aldehyde + NADH + H(+). The enzyme catalyses a secondary alcohol + NAD(+) = a ketone + NADH + H(+). The sequence is that of Alcohol dehydrogenase E chain from Equus caballus (Horse).